The primary structure comprises 242 residues: Ribonuclease 3 2 (242 aa).

The region spanning 12 to 137 (LESLVRKLGL…VLGALYLSTS (126 aa)) is the RNase III domain. Mg(2+) is bound at residue E51. The active site involves D55. Mg(2+) is bound by residues D123 and E126. Residue E126 is part of the active site. One can recognise a DRBM domain in the interval 165–235 (NYKAALQEWT…AKVAFLAITP (71 aa)).

Belongs to the ribonuclease III family. As to quaternary structure, homodimer. Mg(2+) is required as a cofactor.

It is found in the cytoplasm. It carries out the reaction Endonucleolytic cleavage to 5'-phosphomonoester.. Functionally, digests double-stranded RNA. Involved in the processing of primary rRNA transcript to yield the immediate precursors to the large and small rRNAs (23S and 16S). Processes some mRNAs, and tRNAs when they are encoded in the rRNA operon. Processes pre-crRNA and tracrRNA of type II CRISPR loci if present in the organism. The chain is Ribonuclease 3 2 (rnc2) from Nostoc sp. (strain PCC 7120 / SAG 25.82 / UTEX 2576).